The sequence spans 264 residues: MSYISMKQLLEAGVHFGHETKRWNPKFKKFIFAERNGIFIIDLQKTLKQVDRSFDYIKDLAERGGVILFVGTKKQAQEIVELEARRTGMPYVTSRWLGGMLTNFKTMRTRIDRLNELDDLFESERINDRPKAERIQLASERERLLRFVGGIRKMNRLPDAIFVVDPTKEVIAVQEANKLGIPVIALADTDSDPDVIDYIVPGNDDAIRSIQLITHRVGDLLVEARGGHEDVSAGPVEEQSDEAQAAEQGTEGDTAQLTSSQGRS.

The interval 228 to 264 (HEDVSAGPVEEQSDEAQAAEQGTEGDTAQLTSSQGRS) is disordered. The segment covering 251–264 (EGDTAQLTSSQGRS) has biased composition (polar residues).

Belongs to the universal ribosomal protein uS2 family.

This is Small ribosomal subunit protein uS2 from Deinococcus radiodurans (strain ATCC 13939 / DSM 20539 / JCM 16871 / CCUG 27074 / LMG 4051 / NBRC 15346 / NCIMB 9279 / VKM B-1422 / R1).